A 620-amino-acid chain; its full sequence is Chaperone protein HscA homolog (620 aa).

It belongs to the heat shock protein 70 family.

Its function is as follows. Chaperone involved in the maturation of iron-sulfur cluster-containing proteins. Has a low intrinsic ATPase activity which is markedly stimulated by HscB. In Shewanella putrefaciens (strain CN-32 / ATCC BAA-453), this protein is Chaperone protein HscA homolog.